Consider the following 169-residue polypeptide: Der GTPase-activating protein YihI (169 aa).

2 disordered regions span residues 1 to 98 and 144 to 169; these read MKPS…PQAE and GLSY…LRGN. Residues 10 to 19 show a composition bias toward basic residues; it reads SKGHAKARRK. A compositionally biased stretch (basic and acidic residues) spans 20 to 30; that stretch reads TREELDQEARD. A compositionally biased stretch (basic residues) spans 31–40; it reads RKRLKKRRGH. Residues 49–58 are compositionally biased toward polar residues; sequence GNTTSGSKGQ. The span at 147-159 shows a compositional bias: acidic residues; the sequence is YDDDEEEEEDEKQ. Residues 160–169 show a composition bias toward basic and acidic residues; the sequence is EDMMRLLRGN.

Belongs to the YihI family. Interacts with Der.

A GTPase-activating protein (GAP) that modifies Der/EngA GTPase function. May play a role in ribosome biogenesis. This Escherichia coli O6:K15:H31 (strain 536 / UPEC) protein is Der GTPase-activating protein YihI.